We begin with the raw amino-acid sequence, 93 residues long: Small ribosomal subunit protein uS19 (93 aa).

It belongs to the universal ribosomal protein uS19 family.

Protein S19 forms a complex with S13 that binds strongly to the 16S ribosomal RNA. This chain is Small ribosomal subunit protein uS19, found in Ehrlichia chaffeensis (strain ATCC CRL-10679 / Arkansas).